Reading from the N-terminus, the 155-residue chain is Ribosome maturation factor RimP (155 aa).

It belongs to the RimP family.

The protein localises to the cytoplasm. Functionally, required for maturation of 30S ribosomal subunits. The chain is Ribosome maturation factor RimP from Bacteroides fragilis (strain ATCC 25285 / DSM 2151 / CCUG 4856 / JCM 11019 / LMG 10263 / NCTC 9343 / Onslow / VPI 2553 / EN-2).